We begin with the raw amino-acid sequence, 28 residues long: uncharacterized protein (28 aa).

This is an uncharacterized protein from Archaeoglobus fulgidus (strain ATCC 49558 / DSM 4304 / JCM 9628 / NBRC 100126 / VC-16).